A 122-amino-acid chain; its full sequence is MAWVSFYLLPFIFSTGLCALPVLTQPPSASALLGASIKLTCTLSSEHSTYTIEWYQQRPGRSPQYIMKVKSDGSHSKGDGIPDRFMGSSSGADRYLTFSNLQSDDEAEYHCGESHTIDGQVG.

The N-terminal stretch at 1-19 is a signal peptide; it reads MAWVSFYLLPFIFSTGLCA. Residues 20–44 form a framework-1 region; sequence LPVLTQPPSASALLGASIKLTCTLS. One can recognise an Ig-like domain in the interval 21–122; the sequence is PVLTQPPSAS…ESHTIDGQVG (102 aa). The cysteines at positions 41 and 111 are disulfide-linked. The segment at 45-51 is complementarity-determining-1; the sequence is SEHSTYT. Residues 52–68 are framework-2; sequence IEWYQQRPGRSPQYIMK. Residues 69-75 form a complementarity-determining-2 region; sequence VKSDGSH. A framework-3 region spans residues 76–111; the sequence is SKGDGIPDRFMGSSSGADRYLTFSNLQSDDEAEYHC. The complementarity-determining-3 stretch occupies residues 112-122; the sequence is GESHTIDGQVG.

As to quaternary structure, immunoglobulins are composed of two identical heavy chains and two identical light chains; disulfide-linked.

It is found in the secreted. The protein localises to the cell membrane. Its function is as follows. V region of the variable domain of immunoglobulin light chains that participates in the antigen recognition. Immunoglobulins, also known as antibodies, are membrane-bound or secreted glycoproteins produced by B lymphocytes. In the recognition phase of humoral immunity, the membrane-bound immunoglobulins serve as receptors which, upon binding of a specific antigen, trigger the clonal expansion and differentiation of B lymphocytes into immunoglobulins-secreting plasma cells. Secreted immunoglobulins mediate the effector phase of humoral immunity, which results in the elimination of bound antigens. The antigen binding site is formed by the variable domain of one heavy chain, together with that of its associated light chain. Thus, each immunoglobulin has two antigen binding sites with remarkable affinity for a particular antigen. The variable domains are assembled by a process called V-(D)-J rearrangement and can then be subjected to somatic hypermutations which, after exposure to antigen and selection, allow affinity maturation for a particular antigen. The polypeptide is Immunoglobulin lambda variable 4-3 (Homo sapiens (Human)).